Consider the following 119-residue polypeptide: NADH-quinone oxidoreductase subunit A (119 aa).

A run of 3 helical transmembrane segments spans residues 7-27 (FPVL…MFLG), 63-83 (LIAI…PWGV), and 88-108 (IGWL…VGFV).

Belongs to the complex I subunit 3 family. As to quaternary structure, NDH-1 is composed of 14 different subunits. Subunits NuoA, H, J, K, L, M, N constitute the membrane sector of the complex.

Its subcellular location is the cell inner membrane. The enzyme catalyses a quinone + NADH + 5 H(+)(in) = a quinol + NAD(+) + 4 H(+)(out). Its function is as follows. NDH-1 shuttles electrons from NADH, via FMN and iron-sulfur (Fe-S) centers, to quinones in the respiratory chain. The immediate electron acceptor for the enzyme in this species is believed to be ubiquinone. Couples the redox reaction to proton translocation (for every two electrons transferred, four hydrogen ions are translocated across the cytoplasmic membrane), and thus conserves the redox energy in a proton gradient. The sequence is that of NADH-quinone oxidoreductase subunit A from Polynucleobacter necessarius subsp. necessarius (strain STIR1).